A 785-amino-acid chain; its full sequence is Probable serine protease Ga0098714_109514 (785 aa).

Composition is skewed to basic and acidic residues over residues leucine 470–arginine 481 and aspartate 491–aspartate 501. 2 disordered regions span residues leucine 470–aspartate 503 and aspartate 608–serine 629.

It belongs to the peptidase S1 family.

Its function is as follows. Probably a dedicated protease for substrate gasdermin bGSDM; cleaves the bGSDM precursor, releasing the pore-forming moiety, which integrates into the membrane and triggers cell death. Involved in defense against bacteriophages. Expression of gasdermin bGSDM and this neighboring protease is toxic in E.coli on solid medium. This Bradyrhizobium tropiciagri protein is Probable serine protease Ga0098714_109514.